The primary structure comprises 443 residues: Exodeoxyribonuclease 7 large subunit (443 aa).

The protein belongs to the XseA family. As to quaternary structure, heterooligomer composed of large and small subunits.

Its subcellular location is the cytoplasm. The catalysed reaction is Exonucleolytic cleavage in either 5'- to 3'- or 3'- to 5'-direction to yield nucleoside 5'-phosphates.. Functionally, bidirectionally degrades single-stranded DNA into large acid-insoluble oligonucleotides, which are then degraded further into small acid-soluble oligonucleotides. The protein is Exodeoxyribonuclease 7 large subunit of Vibrio vulnificus (strain CMCP6).